Here is a 171-residue protein sequence, read N- to C-terminus: Translationally-controlled tumor protein homolog (171 aa).

The 171-residue stretch at 1–171 (MIIYKDIITG…FKDGLEIEKC (171 aa)) folds into the TCTP domain.

Belongs to the TCTP family.

The protein resides in the cytoplasm. Functionally, involved in calcium binding and microtubule stabilization. The protein is Translationally-controlled tumor protein homolog (tpt1) of Labeo rohita (Indian major carp).